Here is a 468-residue protein sequence, read N- to C-terminus: Malate-2H(+)/Na(+)-lactate antiporter (468 aa).

12 helical membrane passes run 9-29, 30-50, 73-93, 96-116, 136-156, 192-212, 233-253, 258-278, 309-329, 357-377, 405-425, and 428-448; these read LFEIIIVLGVFLALVLSFTVF, LDLPIQLALFVSWFIAMLLGI, AVLILVSVGALIGTWIAGGVV, LIYYGLEFIHPSIFLLATLII, IAMIAIGEGLGIPLPLVAGAI, LYLSIPAYVITAILFTVVGFM, TFDIHIWMLIPAVLVIVLLAM, MPVIVIGALLGAIWAVVFQGM, IVGMLDSLVVIIFGLGFGGLL, LIVAFLANIFGCAMYVSLILT, LTSGMVPWSDNGIYMAGILGV, and FSYLPFMWLSFVAIGLAIIYG.

It belongs to the NhaC Na(+)/H(+) (TC 2.A.35) antiporter family.

It is found in the cell membrane. Couples proton uptake and Na(+) efflux to the substrate-product malate/lactate antiport, in an electroneutral malate-2H(+)/Na(+)-lactate exchange. Plays a role in supporting growth to high density on malate at reduced protonmotive force. This Bacillus subtilis (strain 168) protein is Malate-2H(+)/Na(+)-lactate antiporter (mleN).